Here is a 369-residue protein sequence, read N- to C-terminus: 4-hydroxy-3-methylbut-2-en-1-yl diphosphate synthase (flavodoxin) (369 aa).

[4Fe-4S] cluster contacts are provided by C270, C273, C305, and E312.

This sequence belongs to the IspG family. [4Fe-4S] cluster is required as a cofactor.

The catalysed reaction is (2E)-4-hydroxy-3-methylbut-2-enyl diphosphate + oxidized [flavodoxin] + H2O + 2 H(+) = 2-C-methyl-D-erythritol 2,4-cyclic diphosphate + reduced [flavodoxin]. It participates in isoprenoid biosynthesis; isopentenyl diphosphate biosynthesis via DXP pathway; isopentenyl diphosphate from 1-deoxy-D-xylulose 5-phosphate: step 5/6. In terms of biological role, converts 2C-methyl-D-erythritol 2,4-cyclodiphosphate (ME-2,4cPP) into 1-hydroxy-2-methyl-2-(E)-butenyl 4-diphosphate. This chain is 4-hydroxy-3-methylbut-2-en-1-yl diphosphate synthase (flavodoxin), found in Pseudomonas syringae pv. tomato (strain ATCC BAA-871 / DC3000).